The primary structure comprises 259 residues: ATP synthase subunit a 1 (259 aa).

Transmembrane regions (helical) follow at residues 30–50, 90–110, 135–155, 209–229, and 230–250; these read TLHVDTLFFSVFLGAVFLFFF, LIAPLALSIFAWVFLMNAMDL, DLNATFGMSISVFFLIIFYSL, LIFILIALLPWWVQPALSFPW, and AVFHILIITLQAFIFMVLTIV.

It belongs to the ATPase A chain family. In terms of assembly, F-type ATPases have 2 components, CF(1) - the catalytic core - and CF(0) - the membrane proton channel. CF(1) has five subunits: alpha(3), beta(3), gamma(1), delta(1), epsilon(1). CF(0) has three main subunits: a(1), b(2) and c(9-12). The alpha and beta chains form an alternating ring which encloses part of the gamma chain. CF(1) is attached to CF(0) by a central stalk formed by the gamma and epsilon chains, while a peripheral stalk is formed by the delta and b chains.

Its subcellular location is the cell inner membrane. Functionally, key component of the proton channel; it plays a direct role in the translocation of protons across the membrane. This is ATP synthase subunit a 1 from Methylococcus capsulatus (strain ATCC 33009 / NCIMB 11132 / Bath).